Here is a 244-residue protein sequence, read N- to C-terminus: MLTSPQPRADGRLADVMRPLQITWDPMGFALSSLIIRTGRTSVLCSVCVEEGVPRWRKGQGKGWLSAEYRLLPGSTPQRQNRELLKLSGRTQEIQRLIGRSLRAVIDMAALGETTLRIDCDVIQADAGTRTASITGAWIALKRGCDRLLEQGLLTHQPVIEQVAAVSVGLVESYPLLDLDYSEDSRADVDLNVVMGSNGHLLELQGTAEGAPFSRNQLNDLLNLAEPGLQHLQAFQRSALMQED.

Phosphate-binding positions include Arg90 and 128–130 (GTR).

Belongs to the RNase PH family. In terms of assembly, homohexameric ring arranged as a trimer of dimers.

It catalyses the reaction tRNA(n+1) + phosphate = tRNA(n) + a ribonucleoside 5'-diphosphate. Phosphorolytic 3'-5' exoribonuclease that plays an important role in tRNA 3'-end maturation. Removes nucleotide residues following the 3'-CCA terminus of tRNAs; can also add nucleotides to the ends of RNA molecules by using nucleoside diphosphates as substrates, but this may not be physiologically important. Probably plays a role in initiation of 16S rRNA degradation (leading to ribosome degradation) during starvation. The sequence is that of Ribonuclease PH from Prochlorococcus marinus (strain MIT 9313).